The sequence spans 52 residues: Mating pheromone En-1 (52 aa).

Cystine bridges form between C11–C37, C23–C33, C30–C52, and C34–C46.

The protein localises to the secreted. Its function is as follows. Mating ciliate pheromones (or gamones) are diffusible extracellular communication signals that distinguish different intraspecific classes of cells commonly referred to as 'mating types'. They prepare the latter for conjugation by changing their cell surface properties. The protein is Mating pheromone En-1 of Euplotes nobilii (Ciliate).